Here is a 370-residue protein sequence, read N- to C-terminus: Transcription factor E2F2 (370 aa).

The segment at 1-73 is disordered; that stretch reads MYKRKTASIV…QSQSQPGQQR (73 aa). The segment covering 15–26 has biased composition (low complexity); sequence SAAGTTSSAMMM. A compositionally biased stretch (polar residues) spans 31–49; the sequence is AETSVRSQSYESTPVSMDT. Over residues 59 to 73 the composition is skewed to low complexity; the sequence is SPSNSQSQSQPGQQR. The DNA-binding element occupies 72–137; the sequence is QRSVGSLVLL…GRHCSLVRWR (66 aa). The segment at 137 to 226 is dimerization; sequence RGGGFNNAKD…VDIKRNHYEL (90 aa).

This sequence belongs to the E2F/DP family. In terms of assembly, forms a heterodimer with Dp. Interacts with Rbf/Rbf1 and Rbf2. Component of the DREAM complex, which is at least composed of Myb, Caf1-55, mip40, mip120, mip130, E2f2, Dp, Rbf, Rbf2, lin-52, HDAC1/Rpd3 and l(3)mbt. Ubiquitously expressed in eye disk.

It localises to the nucleus. Its function is as follows. Transcriptional repressor that binds to E2f sites and represses E2f-regulated target genes. Binding to E2f sites requires transcription factor Dp. Acts synergistically with Rbf2 to antagonize E2f1-mediated transcriptional activation. Component of the DREAM complex, a multiprotein complex that can both act as a transcription activator or repressor depending on the context. The DREAM complex is required for recruiting E2f2 at differentiation-specific promoters and for stabilizing E2f2-Rbf complexes during S phase. During development, the complex represses transcription of developmentally controlled E2f target genes. During oogenesis, plays a role in restricting DNA synthesis to sites of chorion gene amplification in late stage ovarian follicle cells. Plays an inhibitory role in ionizing radiation (IR)-induced p53-independent apoptosis. May be involved in cell cycle exit by temporarily limiting CycE-dependent activation of E2f-regulated transcription. The sequence is that of Transcription factor E2F2 (E2f2) from Drosophila melanogaster (Fruit fly).